The chain runs to 72 residues: Translation initiation factor IF-1 (72 aa).

An S1-like domain is found at 1-72 (MAKKDVIELE…TRGRITWRKK (72 aa)).

Belongs to the IF-1 family. Component of the 30S ribosomal translation pre-initiation complex which assembles on the 30S ribosome in the order IF-2 and IF-3, IF-1 and N-formylmethionyl-tRNA(fMet); mRNA recruitment can occur at any time during PIC assembly.

The protein resides in the cytoplasm. Functionally, one of the essential components for the initiation of protein synthesis. Stabilizes the binding of IF-2 and IF-3 on the 30S subunit to which N-formylmethionyl-tRNA(fMet) subsequently binds. Helps modulate mRNA selection, yielding the 30S pre-initiation complex (PIC). Upon addition of the 50S ribosomal subunit IF-1, IF-2 and IF-3 are released leaving the mature 70S translation initiation complex. This chain is Translation initiation factor IF-1, found in Clostridioides difficile (strain 630) (Peptoclostridium difficile).